A 219-amino-acid polypeptide reads, in one-letter code: Large ribosomal subunit protein uL3 (219 aa).

Belongs to the universal ribosomal protein uL3 family. Part of the 50S ribosomal subunit. Forms a cluster with proteins L14 and L19.

In terms of biological role, one of the primary rRNA binding proteins, it binds directly near the 3'-end of the 23S rRNA, where it nucleates assembly of the 50S subunit. This Chlamydia pneumoniae (Chlamydophila pneumoniae) protein is Large ribosomal subunit protein uL3.